A 529-amino-acid polypeptide reads, in one-letter code: MSLTQTPLLQDLGIQNATLHHNPGVDELYAAALRRGEGKQAATGPLVVHTDKTGRSPKDRFIVEDDLTRDTVWWGGFNTPISPVVFDRLLDKMTHYAEGRELFVQDVFAGTDPQYRIAVRVITEMAYHSLFVRNMFVRPTAEELEHFQPDWTVLNIPSFKADPERDGVRSETFILVNFTRKMILVGGTQYAGENKKGIFGVLNYLLPQRGVMPMHCSANMGEDGDVALFFGLSGTGKTTLSADPSRRLIGDDEHGWTDTGVFNFEGGCYAKVIHLNPEAEPAIYRTTQTYGTVLENVVLKPDGTPDLNDGSLTENTRSAYPITQIDNIVPEGRGGHPKNIVFLTADAFGVLPPLSRLTPEQTMYQFISGFTAKIPGTEQGVTEPQPTFSTCFGAPFMPRHPGEYARLLAQKVRESGANVWLVNTGWTGGQYGEGQRMSIQHTRTLINAALSGQLDNVKFEREPFFGLEIPTEVPGVPKEVLNPREAWADKAAYDRTARKLARMFRENFKRFEDGVDPAITASMPEHREA.

Residues arginine 55, tyrosine 190, and lysine 196 each coordinate substrate. ATP-binding positions include lysine 196, histidine 215, and 231–239; that span reads GLSGTGKTT. Lysine 196 and histidine 215 together coordinate Mn(2+). Aspartate 252 contacts Mn(2+). ATP contacts are provided by glutamate 280, arginine 317, and threonine 442. Residue arginine 317 coordinates substrate.

Belongs to the phosphoenolpyruvate carboxykinase (ATP) family. Mn(2+) serves as cofactor.

It localises to the cytoplasm. It carries out the reaction oxaloacetate + ATP = phosphoenolpyruvate + ADP + CO2. It functions in the pathway carbohydrate biosynthesis; gluconeogenesis. Involved in the gluconeogenesis. Catalyzes the conversion of oxaloacetate (OAA) to phosphoenolpyruvate (PEP) through direct phosphoryl transfer between the nucleoside triphosphate and OAA. This is Phosphoenolpyruvate carboxykinase (ATP) from Deinococcus geothermalis (strain DSM 11300 / CIP 105573 / AG-3a).